We begin with the raw amino-acid sequence, 600 residues long: Potassium-transporting ATPase potassium-binding subunit (600 aa).

The next 11 membrane-spanning stretches (helical) occupy residues 6 to 26, 65 to 85, 136 to 156, 179 to 199, 283 to 303, 314 to 334, 367 to 387, 419 to 439, 458 to 478, 523 to 543, and 566 to 586; these read IILL…LGTY, GYAI…YAVQ, ALSG…YALI, LYVL…QGVI, FSNL…CFTF, WAIL…VMGA, FGIS…CGAV, GLYG…LMIG, SLVI…AVVL, VMLA…VLAI, and LFIA…YVPA.

The protein belongs to the KdpA family. As to quaternary structure, the system is composed of three essential subunits: KdpA, KdpB and KdpC.

The protein localises to the cell inner membrane. Functionally, part of the high-affinity ATP-driven potassium transport (or Kdp) system, which catalyzes the hydrolysis of ATP coupled with the electrogenic transport of potassium into the cytoplasm. This subunit binds the periplasmic potassium ions and delivers the ions to the membrane domain of KdpB through an intramembrane tunnel. The sequence is that of Potassium-transporting ATPase potassium-binding subunit from Janthinobacterium sp. (strain Marseille) (Minibacterium massiliensis).